Here is a 554-residue protein sequence, read N- to C-terminus: Endochitinase (554 aa).

Positions 1–19 (MRATLATLAVLALATAVQS) are cleaved as a signal peptide. The GH18 domain occupies 23–398 (ARIVCYFSNW…KILHKHMSSY (376 aa)). Residues C27 and C52 are joined by a disulfide bond. Residue 76–77 (LD) coordinates chitin. Residue N85 is glycosylated (N-linked (GlcNAc...) asparagine). Residue 103-106 (GGWA) coordinates chitin. Catalysis depends on E146, which acts as the Proton donor. Chitin is bound by residues Y147 and 213 to 216 (MSYD). Residue N303 is glycosylated (N-linked (GlcNAc...) asparagine). W370 is a binding site for chitin. The disordered stretch occupies residues 398-494 (YTVPPPHTEN…VPPTENEVDG (97 aa)). Over residues 431 to 457 (PTTTTAKPASTTKTTVKTTTTTTAKPP) the composition is skewed to low complexity. Basic and acidic residues predominate over residues 467-477 (INVRPEPKPEP). The 59-residue stretch at 495 to 553 (SEICNSDQDYIPDKKHCDKYWRCVNGEAMQFSCQHGTVFNVELNVCDWPSNATRRECQQ) folds into the Chitin-binding type-2 domain. C527 and C540 form a disulfide bridge. N545 carries N-linked (GlcNAc...) asparagine glycosylation.

It belongs to the glycosyl hydrolase 18 family. Chitinase class II subfamily. Epidermis and gut.

The protein localises to the secreted. It catalyses the reaction Random endo-hydrolysis of N-acetyl-beta-D-glucosaminide (1-&gt;4)-beta-linkages in chitin and chitodextrins.. Its function is as follows. Digests chitin in the exoskeleton during the molting process. This Manduca sexta (Tobacco hawkmoth) protein is Endochitinase.